Reading from the N-terminus, the 226-residue chain is Ribonuclease 3 (226 aa).

In terms of domain architecture, RNase III spans 6-128 (INRLQRKLGY…LIGGIFLDSD (123 aa)). Glutamate 41 lines the Mg(2+) pocket. Residue aspartate 45 is part of the active site. Residues aspartate 114 and glutamate 117 each coordinate Mg(2+). Glutamate 117 is a catalytic residue. Residues 155 to 225 (DPKTRLQEFL…AEQALKKLEL (71 aa)) enclose the DRBM domain.

The protein belongs to the ribonuclease III family. In terms of assembly, homodimer. Mg(2+) is required as a cofactor.

The protein localises to the cytoplasm. The enzyme catalyses Endonucleolytic cleavage to 5'-phosphomonoester.. In terms of biological role, digests double-stranded RNA. Involved in the processing of primary rRNA transcript to yield the immediate precursors to the large and small rRNAs (23S and 16S). Processes some mRNAs, and tRNAs when they are encoded in the rRNA operon. Processes pre-crRNA and tracrRNA of type II CRISPR loci if present in the organism. The sequence is that of Ribonuclease 3 from Pectobacterium carotovorum subsp. carotovorum (strain PC1).